A 386-amino-acid polypeptide reads, in one-letter code: Palmitoyltransferase ZDHHC9 (386 aa).

Residues 1–35 (MSAVMITRKITRKWEKLPGKNTFCCDGRVMMARQK) lie on the Cytoplasmic side of the membrane. Residues 36–56 (GVFYLTLFLIVGTCSLFFAFE) traverse the membrane as a helical segment. Residues 57 to 63 (CPYLAVH) are Lumenal-facing. Residues 64–84 (LSPAIPVFAVLLFVFVMAMLL) form a helical membrane-spanning segment. Residues 85–183 (RTSFSDPGVL…NCVGKRNYRY (99 aa)) are Cytoplasmic-facing. The region spanning 139–189 (KYCYTCKIFRPPRASHCSICDNCVDRFDHHCPWVGNCVGKRNYRYFYLFTL) is the DHHC domain. Cys-169 serves as the catalytic S-palmitoyl cysteine intermediate. A helical membrane pass occupies residues 184-204 (FYLFTLSLSLLTIYIFAFDIV). Residues 205–224 (HVVLRSVDSGFVNTLKETPG) lie on the Lumenal side of the membrane. The helical transmembrane segment at 225–245 (TVLEVLVCFFTLWSVVGLTGF) threads the bilayer. At 246–386 (HTYLISLNQT…APAVIKESTH (141 aa)) the chain is on the cytoplasmic side. Residues 306–334 (SCSSAPSNGATTVPVNKSSNPATQTTKSS) are compositionally biased toward polar residues. The segment at 306 to 386 (SCSSAPSNGA…APAVIKESTH (81 aa)) is disordered.

Belongs to the DHHC palmitoyltransferase family. ERF2/ZDHHC9 subfamily.

The protein localises to the endoplasmic reticulum membrane. It is found in the golgi apparatus membrane. It carries out the reaction L-cysteinyl-[protein] + hexadecanoyl-CoA = S-hexadecanoyl-L-cysteinyl-[protein] + CoA. Functionally, palmitoyltransferase that catalyzes the addition of palmitate onto various protein substrates, such as ADRB2, GSDMD, HRAS, NRAS and CGAS. The polypeptide is Palmitoyltransferase ZDHHC9 (Danio rerio (Zebrafish)).